A 222-amino-acid chain; its full sequence is CEACAM1-like protein UL7 (222 aa).

Asparagine 50, asparagine 56, asparagine 60, asparagine 71, asparagine 105, asparagine 109, asparagine 125, asparagine 132, asparagine 147, asparagine 164, asparagine 168, and asparagine 189 each carry an N-linked (GlcNAc...) asparagine; by host glycan. Residues 193-213 (LALVGVIVFIALIVVCIMGWW) form a helical membrane-spanning segment.

This sequence belongs to the RL11 family. Interacts with host FLT3. Highly glycosylated.

It is found in the secreted. The protein localises to the host cell membrane. Plays a role in modulating the host immune response and affecting host cytokine production. Structurally and functionally homolog of host CEACAM1, induces endothelial cell angiogenesis. Ligands for host FLT3 receptor, activates the PI3K/AKT and MAPK/ERK pathways. In turn, triggers hematopoietic progenitor cell and monocyte differentiation leading to virus reactivation. The chain is CEACAM1-like protein UL7 (UL7) from Human cytomegalovirus (strain AD169) (HHV-5).